Consider the following 299-residue polypeptide: Lipoyl synthase 2 (299 aa).

Positions 45, 50, 56, 71, 75, 78, and 295 each coordinate [4Fe-4S] cluster. The Radical SAM core domain occupies 57 to 284 (YASGTATFLL…KSFCSKLGFK (228 aa)).

It belongs to the radical SAM superfamily. Lipoyl synthase family. [4Fe-4S] cluster is required as a cofactor.

The protein localises to the cytoplasm. It catalyses the reaction [[Fe-S] cluster scaffold protein carrying a second [4Fe-4S](2+) cluster] + N(6)-octanoyl-L-lysyl-[protein] + 2 oxidized [2Fe-2S]-[ferredoxin] + 2 S-adenosyl-L-methionine + 4 H(+) = [[Fe-S] cluster scaffold protein] + N(6)-[(R)-dihydrolipoyl]-L-lysyl-[protein] + 4 Fe(3+) + 2 hydrogen sulfide + 2 5'-deoxyadenosine + 2 L-methionine + 2 reduced [2Fe-2S]-[ferredoxin]. It functions in the pathway protein modification; protein lipoylation via endogenous pathway; protein N(6)-(lipoyl)lysine from octanoyl-[acyl-carrier-protein]: step 2/2. Its function is as follows. Catalyzes the radical-mediated insertion of two sulfur atoms into the C-6 and C-8 positions of the octanoyl moiety bound to the lipoyl domains of lipoate-dependent enzymes, thereby converting the octanoylated domains into lipoylated derivatives. The chain is Lipoyl synthase 2 from Prochlorococcus marinus subsp. pastoris (strain CCMP1986 / NIES-2087 / MED4).